A 478-amino-acid polypeptide reads, in one-letter code: Glycogen synthase (478 aa).

Residue K15 coordinates ADP-alpha-D-glucose.

This sequence belongs to the glycosyltransferase 1 family. Bacterial/plant glycogen synthase subfamily.

It catalyses the reaction [(1-&gt;4)-alpha-D-glucosyl](n) + ADP-alpha-D-glucose = [(1-&gt;4)-alpha-D-glucosyl](n+1) + ADP + H(+). Its pathway is glycan biosynthesis; glycogen biosynthesis. In terms of biological role, synthesizes alpha-1,4-glucan chains using ADP-glucose. The polypeptide is Glycogen synthase (Actinobacillus pleuropneumoniae serotype 5b (strain L20)).